The primary structure comprises 385 residues: MALPHDSNETSYLLPPNNEDWGRQTIPDFVYGQKDLMAEGIQWPRNAPGIPDALPQSPFDAALCSAWKQRVELGLFRYRLRELQTQILPGAVGFVAQLNVERGVQRRPPQTIKSVRQAFDPVQFNFNKIRPGEVLFRLHREPDLPGTLLQEDILVVINVSPLEWGHVLLVPEPARQLPQRLLPGALRAGIEAVLLSLHPGFRVGFNSLGGLASVNHLHLHGYYLAHRLPVEQAPSEPLDPGGHLHLLQDLPAPGFLFYTRGPGPDLESLISRVCRATDYLTDHEIAHNLFVTRGAPPGKTSPSSALTGVRVILWARKSSFGIKDGEAFNVALCELAGHLPVKTSQDFSSLTEAAAVALIQDCRLPPSQAEDVQAALVALMSQEEQ.

Residue His218 is the Tele-GMP-histidine intermediate of the active site.

Belongs to the GDPGP1 family.

It localises to the cytoplasm. The enzyme catalyses GDP-alpha-D-glucose + phosphate = alpha-D-glucose 1-phosphate + GDP + H(+). Specific and highly efficient GDP-D-glucose phosphorylase regulating the levels of GDP-D-glucose in cells. In Homo sapiens (Human), this protein is GDP-D-glucose phosphorylase 1 (GDPGP1).